We begin with the raw amino-acid sequence, 205 residues long: Metal-independent carbonic anhydrase (205 aa).

Residues 1 to 24 form the signal peptide; the sequence is MNLFKPRILVLFAATALISGIAIV. The hydrogencarbonate site is built by Thr106 and Tyr124.

It belongs to the iota-class carbonic anhydrase family. Homotetramer; dimer of dimers. Does not require a metal cofactor. serves as cofactor.

It catalyses the reaction hydrogencarbonate + H(+) = CO2 + H2O. Activity is not affected by EDTA or 2,6-pyridinedicarboxylic acid (PDA). Activity is not affected by addition of most divalent metal ions, except zinc ions which decrease the activity. Inhibited by the iodide ion. In terms of biological role, catalyzes the hydration of carbon dioxide (CO2) to bicarbonate (HCO3(-)). Has only very low bicarbonate dehydration activity. May function even in metal-poor environments. The protein is Metal-independent carbonic anhydrase of Nostoc sp. (strain PCC 7120 / SAG 25.82 / UTEX 2576).